Consider the following 669-residue polypeptide: Sodium-dependent phosphate transporter (669 aa).

Residues 1 to 6 (MVTGPD) are Extracellular-facing. Residues 7–27 (MLWLVITSGIACFFMAFVTGA) form a helical membrane-spanning segment. Topologically, residues 28-47 (NDIANTFSTSIGSKAISIKK) are cytoplasmic. The chain crosses the membrane as a helical span at residues 48 to 68 (ALIVAFFFEALGASLLGGTVT). Residues 69 to 86 (DSIRSKIINFQVFYDTPE) lie on the Extracellular side of the membrane. The helical transmembrane segment at 87–107 (FLMLGMCCALMGATVWLAVAT) threads the bilayer. Arginine 108 is a topological domain (cytoplasmic). A helical membrane pass occupies residues 109–129 (AGLPVSTTHSIIGALLGFGLA). The Extracellular portion of the chain corresponds to 130–143 (TGNMKSIKWEKINN). The helical transmembrane segment at 144–164 (IVISWLAAPILAGTCSAIAFT) threads the bilayer. The Cytoplasmic segment spans residues 165–186 (VLRMLILRKKNSFEIIKKMYWF). A helical membrane pass occupies residues 187 to 207 (LIFLITLPFSVFLIFHNPIVI). The Extracellular segment spans residues 208-239 (NTQCKMKKDGKVIVSSPCYIEDWSAAHSFYAS). A helical membrane pass occupies residues 240-260 (IICILLSSLLTAIGSFVIYII). The Cytoplasmic segment spans residues 261-502 (YNKRINNYNL…YNNGIRGKIK (242 aa)). The span at 311–335 (AHNNTSNGTKQNQVGNGTKSNNNNV) shows a compositional bias: polar residues. Disordered stretches follow at residues 311-364 (AHNN…SVEA) and 392-444 (TNMN…KNME). Over residues 342-352 (KNVKSQQDDSK) the composition is skewed to basic and acidic residues. The segment covering 395 to 433 (NENNNNSNKNNNSNKNNNSNKNNNSNKNNNSNNGNSNEG) has biased composition (low complexity). The chain crosses the membrane as a helical span at residues 503 to 523 (VQWYILLFGGLSMSLGLSIMG). Residues 524-542 (YRVIKTVGMKLIKITPARG) lie on the Extracellular side of the membrane. The helical transmembrane segment at 543 to 563 (FTIELISGLVVLFFSICGIPL) threads the bilayer. Over 564-632 (SSTHCAVSSV…TSCVNLRLFR (69 aa)) the chain is Cytoplasmic. A helical membrane pass occupies residues 633-653 (TVFLSWILTVVFSATVTAGIY). The Extracellular portion of the chain corresponds to 654–669 (SFAAYSPSYIMKMQTV).

This sequence belongs to the inorganic phosphate transporter (PiT) (TC 2.A.20) family.

The protein localises to the cell membrane. It carries out the reaction 2 Na(+)(out) + phosphate(out) = 2 Na(+)(in) + phosphate(in). Functionally, sodium-phosphate symporter which preferentially transports the monovalent form of phosphate with a stoichiometry of two sodium ions per phosphate ion. The polypeptide is Sodium-dependent phosphate transporter (Plasmodium falciparum).